Here is a 153-residue protein sequence, read N- to C-terminus: Ribonuclease H (153 aa).

The RNase H type-1 domain maps to Met-1–Glu-141. Positions 9, 47, 69, and 133 each coordinate Mg(2+).

The protein belongs to the RNase H family. Monomer. Mg(2+) is required as a cofactor.

Its subcellular location is the cytoplasm. The enzyme catalyses Endonucleolytic cleavage to 5'-phosphomonoester.. Functionally, endonuclease that specifically degrades the RNA of RNA-DNA hybrids. This is Ribonuclease H from Psychromonas ingrahamii (strain DSM 17664 / CCUG 51855 / 37).